The sequence spans 442 residues: Signal recognition particle 54 kDa protein (442 aa).

Residues 106–113 (GLQGSGKT), 186–190 (DTAGR), and 244–247 (TKLD) each bind GTP.

The protein belongs to the GTP-binding SRP family. SRP54 subfamily. As to quaternary structure, part of the signal recognition particle protein translocation system, which is composed of SRP and FtsY. Archaeal SRP consists of a 7S RNA molecule of 300 nucleotides and two protein subunits: SRP54 and SRP19.

It localises to the cytoplasm. It carries out the reaction GTP + H2O = GDP + phosphate + H(+). In terms of biological role, involved in targeting and insertion of nascent membrane proteins into the cytoplasmic membrane. Binds to the hydrophobic signal sequence of the ribosome-nascent chain (RNC) as it emerges from the ribosomes. The SRP-RNC complex is then targeted to the cytoplasmic membrane where it interacts with the SRP receptor FtsY. The sequence is that of Signal recognition particle 54 kDa protein from Methanothermobacter thermautotrophicus (strain ATCC 29096 / DSM 1053 / JCM 10044 / NBRC 100330 / Delta H) (Methanobacterium thermoautotrophicum).